Here is a 226-residue protein sequence, read N- to C-terminus: Biosynthetic peptidoglycan transglycosylase (226 aa).

Residues 7–29 (VMALSAIGLLLLPYLLTPLYRIG) form a helical membrane-spanning segment.

It belongs to the glycosyltransferase 51 family.

Its subcellular location is the cell inner membrane. The catalysed reaction is [GlcNAc-(1-&gt;4)-Mur2Ac(oyl-L-Ala-gamma-D-Glu-L-Lys-D-Ala-D-Ala)](n)-di-trans,octa-cis-undecaprenyl diphosphate + beta-D-GlcNAc-(1-&gt;4)-Mur2Ac(oyl-L-Ala-gamma-D-Glu-L-Lys-D-Ala-D-Ala)-di-trans,octa-cis-undecaprenyl diphosphate = [GlcNAc-(1-&gt;4)-Mur2Ac(oyl-L-Ala-gamma-D-Glu-L-Lys-D-Ala-D-Ala)](n+1)-di-trans,octa-cis-undecaprenyl diphosphate + di-trans,octa-cis-undecaprenyl diphosphate + H(+). The protein operates within cell wall biogenesis; peptidoglycan biosynthesis. Peptidoglycan polymerase that catalyzes glycan chain elongation from lipid-linked precursors. The protein is Biosynthetic peptidoglycan transglycosylase of Nitrobacter winogradskyi (strain ATCC 25391 / DSM 10237 / CIP 104748 / NCIMB 11846 / Nb-255).